The primary structure comprises 387 residues: MATTRDYYEILGLSRDATPEDIKKSYRKLALKYHPDRNKEPGAEEKFKEISEAYAVLSDPEKRAQYDRFGHAGINGQYTAEDIFRGADFSGFGDIFEMFFGGSRRGPRGPRRGSDLQYDLYITFEEAAFGVRKDIDVPRTERCSNCSGTGARPGTSPKRCPTCGGTGQIRTTRTGLGMQFVSTTTCSTCRGKGQVIESPCPVCSGTGRVRNTRKITVNVPAGADSGMSLRLSGEGDAGDPGAPPGDLYVVLHVMEHKIFKRVDYDVISEVPISFAQAALGTDIMVDTLYGKVKMNIPAGTPTHSVFKIKEKGIQHLHGNRRGDQLVRVVIKTPTNLSHEQKRNFFASLKALSSGKNPGGEKGRYDKFTEKSKKSKGFFEKVKDAFES.

The J domain maps to 6–70 (DYYEILGLSR…EKRAQYDRFG (65 aa)). A CR-type zinc finger spans residues 130–212 (GVRKDIDVPR…CSGTGRVRNT (83 aa)). Zn(2+) contacts are provided by Cys143, Cys146, Cys160, Cys163, Cys186, Cys189, Cys200, and Cys203. 4 CXXCXGXG motif repeats span residues 143 to 150 (CSNCSGTG), 160 to 167 (CPTCGGTG), 186 to 193 (CSTCRGKG), and 200 to 207 (CPVCSGTG). The interval 143 to 162 (CSNCSGTGARPGTSPKRCPT) is disordered.

Belongs to the DnaJ family. In terms of assembly, homodimer. It depends on Zn(2+) as a cofactor.

Its subcellular location is the cytoplasm. Its function is as follows. Participates actively in the response to hyperosmotic and heat shock by preventing the aggregation of stress-denatured proteins and by disaggregating proteins, also in an autonomous, DnaK-independent fashion. Unfolded proteins bind initially to DnaJ; upon interaction with the DnaJ-bound protein, DnaK hydrolyzes its bound ATP, resulting in the formation of a stable complex. GrpE releases ADP from DnaK; ATP binding to DnaK triggers the release of the substrate protein, thus completing the reaction cycle. Several rounds of ATP-dependent interactions between DnaJ, DnaK and GrpE are required for fully efficient folding. Also involved, together with DnaK and GrpE, in the DNA replication of plasmids through activation of initiation proteins. This is Chaperone protein DnaJ from Methanosarcina thermophila.